Reading from the N-terminus, the 297-residue chain is MDLVNHLNDKLLFAIPKKGRLYEKSVSILKGSDIKFHRSARLDIAISTNMPVALIFLPAADIPMFVGEGRCDLGITGVDQVRESEVDVNLPIDLQFGTCKLQVQVPVAGEYTSPEQLIGKTIVSSFVNLTKKYFAQLEGVPESEMVTRVKYVGGSVEASCALGVADAIVDLVESGETMRAAGLTAIATVLDTSAHLIESKNPKGDVELLRTIKSRIEGVMTAQKYVSCSYNAPENKLPELLKITPGRRAPTISQINDSGWVAVSSMIERKNKGDIMDDLKKNGAEDIMVFEISNCRV.

It belongs to the ATP phosphoribosyltransferase family.

Its subcellular location is the cytoplasm. The enzyme catalyses 1-(5-phospho-beta-D-ribosyl)-ATP + diphosphate = 5-phospho-alpha-D-ribose 1-diphosphate + ATP. Its pathway is amino-acid biosynthesis; L-histidine biosynthesis; L-histidine from 5-phospho-alpha-D-ribose 1-diphosphate: step 1/9. Its function is as follows. Catalyzes the condensation of ATP and 5-phosphoribose 1-diphosphate to form N'-(5'-phosphoribosyl)-ATP (PR-ATP). Has a crucial role in the pathway because the rate of histidine biosynthesis seems to be controlled primarily by regulation of the enzymatic activity. The polypeptide is ATP phosphoribosyltransferase (HIS1) (Kluyveromyces lactis (strain ATCC 8585 / CBS 2359 / DSM 70799 / NBRC 1267 / NRRL Y-1140 / WM37) (Yeast)).